The sequence spans 353 residues: MTIALGRFTKEEKDLFDIMDDWLRRDRFVFVGWSGLLLFPCAYFALGGWFTGTTFVTSWYTHGLASSYLEGCNFLTAAVSTPANSLAHSLLLLWGPEAQGDFTRWCQLGGLWTFVALHGAFGLIGFMLRQFELARSVQLRPYNAIAFSAPIAVFVSVFLIYPLGQSGWFFAPSFGVAAIFRFILFFQGFHNWTLNPFHMMGVAGVLGAALLCAIHGATVENTLFEDGDGANTFRAFNPTQAEETYSMVTANRFWSQIFGVAFSNKRWLHFFMLFVPVTGLWMSALGVVGLALNLRAYDFVSQEIRAAEDPEFETFYTKNLLLNEGIRAWMAAQDQPHENLIFPEEVLPRGNAL.

The residue at position 2 (T2) is an N-acetylthreonine. A Phosphothreonine modification is found at T2. The helical transmembrane segment at 41 to 61 (CAYFALGGWFTGTTFVTSWYT) threads the bilayer. Residue H118 participates in chlorophyll a binding. A helical transmembrane segment spans residues 125–141 (GFMLRQFELARSVQLRP). The pheophytin a site is built by Q130 and N143. The helical transmembrane segment at 153–166 (VFVSVFLIYPLGQS) threads the bilayer. Residue H198 coordinates chlorophyll a. The chain crosses the membrane as a helical span at residues 208–228 (AALLCAIHGATVENTLFEDGD). Residues H215 and F262 each contribute to the a plastoquinone site. H215 contributes to the Fe cation binding site. Fe cation is bound at residue H269. A helical transmembrane segment spans residues 279-295 (GLWMSALGVVGLALNLR).

It belongs to the reaction center PufL/M/PsbA/D family. In terms of assembly, PSII is composed of 1 copy each of membrane proteins PsbA, PsbB, PsbC, PsbD, PsbE, PsbF, PsbH, PsbI, PsbJ, PsbK, PsbL, PsbM, PsbT, PsbX, PsbY, PsbZ, Psb30/Ycf12, at least 3 peripheral proteins of the oxygen-evolving complex and a large number of cofactors. It forms dimeric complexes. The cofactor is The D1/D2 heterodimer binds P680, chlorophylls that are the primary electron donor of PSII, and subsequent electron acceptors. It shares a non-heme iron and each subunit binds pheophytin, quinone, additional chlorophylls, carotenoids and lipids. There is also a Cl(-1) ion associated with D1 and D2, which is required for oxygen evolution. The PSII complex binds additional chlorophylls, carotenoids and specific lipids..

The protein resides in the plastid. It is found in the chloroplast thylakoid membrane. It carries out the reaction 2 a plastoquinone + 4 hnu + 2 H2O = 2 a plastoquinol + O2. Photosystem II (PSII) is a light-driven water:plastoquinone oxidoreductase that uses light energy to abstract electrons from H(2)O, generating O(2) and a proton gradient subsequently used for ATP formation. It consists of a core antenna complex that captures photons, and an electron transfer chain that converts photonic excitation into a charge separation. The D1/D2 (PsbA/PsbD) reaction center heterodimer binds P680, the primary electron donor of PSII as well as several subsequent electron acceptors. D2 is needed for assembly of a stable PSII complex. The protein is Photosystem II D2 protein of Ceratophyllum demersum (Rigid hornwort).